The chain runs to 123 residues: Large ribosomal subunit protein uL18 (123 aa).

It belongs to the universal ribosomal protein uL18 family. In terms of assembly, part of the 50S ribosomal subunit; part of the 5S rRNA/L5/L18/L25 subcomplex. Contacts the 5S and 23S rRNAs.

Its function is as follows. This is one of the proteins that bind and probably mediate the attachment of the 5S RNA into the large ribosomal subunit, where it forms part of the central protuberance. This is Large ribosomal subunit protein uL18 from Symbiobacterium thermophilum (strain DSM 24528 / JCM 14929 / IAM 14863 / T).